Consider the following 430-residue polypeptide: Adenylosuccinate synthetase (430 aa).

GTP-binding positions include 12-18 (GDEGKGK) and 40-42 (GHT). Asp-13 serves as the catalytic Proton acceptor. Mg(2+)-binding residues include Asp-13 and Gly-40. Residues 13 to 16 (DEGK), 38 to 41 (NAGH), Thr-130, Arg-144, Gln-224, Thr-239, and Arg-303 contribute to the IMP site. Residue His-41 is the Proton donor of the active site. A substrate-binding site is contributed by 299-305 (VVTGRKR). Residues Arg-305, 331–333 (KLD), and 413–415 (STS) each bind GTP.

This sequence belongs to the adenylosuccinate synthetase family. As to quaternary structure, homodimer. The cofactor is Mg(2+).

The protein resides in the cytoplasm. The catalysed reaction is IMP + L-aspartate + GTP = N(6)-(1,2-dicarboxyethyl)-AMP + GDP + phosphate + 2 H(+). Its pathway is purine metabolism; AMP biosynthesis via de novo pathway; AMP from IMP: step 1/2. Its function is as follows. Plays an important role in the de novo pathway of purine nucleotide biosynthesis. Catalyzes the first committed step in the biosynthesis of AMP from IMP. This Methylobacterium sp. (strain 4-46) protein is Adenylosuccinate synthetase.